The primary structure comprises 252 residues: Imidazole glycerol phosphate synthase subunit HisF (252 aa).

Catalysis depends on residues Asp11 and Asp130.

The protein belongs to the HisA/HisF family. Heterodimer of HisH and HisF.

It is found in the cytoplasm. The catalysed reaction is 5-[(5-phospho-1-deoxy-D-ribulos-1-ylimino)methylamino]-1-(5-phospho-beta-D-ribosyl)imidazole-4-carboxamide + L-glutamine = D-erythro-1-(imidazol-4-yl)glycerol 3-phosphate + 5-amino-1-(5-phospho-beta-D-ribosyl)imidazole-4-carboxamide + L-glutamate + H(+). It functions in the pathway amino-acid biosynthesis; L-histidine biosynthesis; L-histidine from 5-phospho-alpha-D-ribose 1-diphosphate: step 5/9. Functionally, IGPS catalyzes the conversion of PRFAR and glutamine to IGP, AICAR and glutamate. The HisF subunit catalyzes the cyclization activity that produces IGP and AICAR from PRFAR using the ammonia provided by the HisH subunit. This chain is Imidazole glycerol phosphate synthase subunit HisF, found in Thermococcus gammatolerans (strain DSM 15229 / JCM 11827 / EJ3).